The primary structure comprises 65 residues: Alpha-conotoxin Mr1.1 (65 aa).

The N-terminal stretch at 1 to 21 is a signal peptide; the sequence is MGMRMMFTVFLLVVLATTVVS. Residues 22–48 constitute a propeptide that is removed on maturation; sequence FTSDRASDGRKAAAKDKASDLVALTVK. Intrachain disulfides connect cysteine 50-cysteine 56 and cysteine 51-cysteine 64. Positions 52-54 are ser-Xaa-Pro motif, crucial for potent interaction with nAChR; it reads SHP. Cysteine 64 is modified (cysteine amide).

Belongs to the conotoxin A superfamily. As to expression, expressed by the venom duct.

The protein resides in the secreted. Alpha-conotoxins act on postsynaptic membranes, they bind to the nicotinic acetylcholine receptors (nAChR) and thus inhibit them. This toxin potently and reversibly inhibits alpha-9-alpha-10/CHRNA9-CHRNA10 (IC(50)=92 nM (human) and IC(50)=8.3 nM (rat)) and human alpha3-beta-2/CHRNA3-CHRNB2 nAChR (IC(50)=218.9 nM). Also moderately inhibits human alpha-3-beta-4/CHRNA3-CHRNB4 (60% inhibition at 1 uM), rat alpha-7/CHRNA7 (65% inhibition at 1 uM) and rat alpha-3-beta-2/CHRNA3-CHRNB2 nAChR (50-70% inhibition at 10 uM). In two rat pain models, this toxin shows analgesic effect. The protein is Alpha-conotoxin Mr1.1 of Conus marmoreus (Marble cone).